Here is a 130-residue protein sequence, read N- to C-terminus: Small ribosomal subunit protein uS9 (130 aa).

The disordered stretch occupies residues 111–130 (VERKKPGLKKARKASQFSKR). A compositionally biased stretch (basic residues) spans 116 to 130 (PGLKKARKASQFSKR).

Belongs to the universal ribosomal protein uS9 family.

In Lactococcus lactis subsp. lactis (strain IL1403) (Streptococcus lactis), this protein is Small ribosomal subunit protein uS9.